The primary structure comprises 68 residues: UPF0434 protein BTH_I0741 (68 aa).

Belongs to the UPF0434 family.

This is UPF0434 protein BTH_I0741 from Burkholderia thailandensis (strain ATCC 700388 / DSM 13276 / CCUG 48851 / CIP 106301 / E264).